The sequence spans 156 residues: Large ribosomal subunit protein bL9 (156 aa).

It belongs to the bacterial ribosomal protein bL9 family.

Binds to the 23S rRNA. This chain is Large ribosomal subunit protein bL9, found in Treponema pallidum (strain Nichols).